Here is a 31-residue protein sequence, read N- to C-terminus: PVAPEYLFKKEEDKGANKEEEEVAPELGIRA.

The disordered stretch occupies residues 1-31 (PVAPEYLFKKEEDKGANKEEEEVAPELGIRA). The segment covering 7–18 (LFKKEEDKGANK) has biased composition (basic and acidic residues).

It belongs to the aspartate/glutamate racemases family. It depends on pyridoxal 5'-phosphate as a cofactor.

The catalysed reaction is L-aspartate = D-aspartate. With respect to regulation, inhibited by hydroxylamine, aminooxyacetate, phenylhydrazine and sodium borohydride. Functionally, highly specific toward aspartate and entirely inactive on glutamate, alanine and serine. The protein is Aspartate racemase of Anadara broughtonii (Blood clam).